The sequence spans 217 residues: Probable cutinase 3 (217 aa).

The first 17 residues, 1–17, serve as a signal peptide directing secretion; sequence MSLRSLFVAGLATLALA. Intrachain disulfides connect cysteine 39–cysteine 118 and cysteine 65–cysteine 79. The Nucleophile role is filled by serine 129. Cysteines 180 and 187 form a disulfide. Residue aspartate 184 is part of the active site. Catalysis depends on histidine 197, which acts as the Proton donor/acceptor.

This sequence belongs to the cutinase family.

The protein resides in the secreted. It catalyses the reaction cutin + H2O = cutin monomers.. Functionally, catalyzes the hydrolysis of complex carboxylic polyesters found in the cell wall of plants. Degrades cutin, a macromolecule that forms the structure of the plant cuticle. In Aspergillus fumigatus (strain CBS 144.89 / FGSC A1163 / CEA10) (Neosartorya fumigata), this protein is Probable cutinase 3.